A 47-amino-acid chain; its full sequence is Bifunctional chitinase/lysozyme (47 aa).

Residues Gly1–Ala47 enclose the GH18 domain.

This sequence belongs to the glycosyl hydrolase 18 family. Chitinase class II subfamily.

It is found in the secreted. Its subcellular location is the extracellular space. The catalysed reaction is Random endo-hydrolysis of N-acetyl-beta-D-glucosaminide (1-&gt;4)-beta-linkages in chitin and chitodextrins.. It catalyses the reaction Hydrolysis of (1-&gt;4)-beta-linkages between N-acetylmuramic acid and N-acetyl-D-glucosamine residues in a peptidoglycan and between N-acetyl-D-glucosamine residues in chitodextrins.. Its function is as follows. Bifunctional enzyme with lysozyme/chitinase activity. The protein is Bifunctional chitinase/lysozyme of Parthenocissus quinquefolia (Virginia creeper).